The following is a 736-amino-acid chain: Prolyl oligopeptidase dbiP (736 aa).

Catalysis depends on charge relay system residues Ser-572, Asp-656, and His-692.

This sequence belongs to the peptidase S9A family. In terms of assembly, monomer.

The enzyme catalyses Hydrolysis of Pro-|-Xaa &gt;&gt; Ala-|-Xaa in oligopeptides.. The protein operates within mycotoxin biosynthesis. Functionally, prolyl oligopeptidase; part of the gene cluster that mediates the biosynthesis of dendrothelin A, a highly methylated cyclic dodecapeptide showing slight nematodicidal activity. Excises and catalyzes the macrocyclization of the methylated core peptide of dbiMA to yield dendrothelin A. DbiP works in a two-step fashion with an initial cleavage at the N-terminus, followed by a second cleavage at the C-terminus of the core peptide. According to this mechanism, the free N-terminus of the core peptide, generated by the first cleavage, attacks the covalent intermediate of the second cleavage, which results in macrocyclization of the core peptide. The polypeptide is Prolyl oligopeptidase dbiP (Dendrothele bispora (strain CBS 962.96)).